Consider the following 453-residue polypeptide: Probable glycine dehydrogenase (decarboxylating) subunit 1 (453 aa).

Belongs to the GcvP family. N-terminal subunit subfamily. The glycine cleavage system is composed of four proteins: P, T, L and H. In this organism, the P 'protein' is a heterodimer of two subunits.

The enzyme catalyses N(6)-[(R)-lipoyl]-L-lysyl-[glycine-cleavage complex H protein] + glycine + H(+) = N(6)-[(R)-S(8)-aminomethyldihydrolipoyl]-L-lysyl-[glycine-cleavage complex H protein] + CO2. In terms of biological role, the glycine cleavage system catalyzes the degradation of glycine. The P protein binds the alpha-amino group of glycine through its pyridoxal phosphate cofactor; CO(2) is released and the remaining methylamine moiety is then transferred to the lipoamide cofactor of the H protein. In Caulobacter sp. (strain K31), this protein is Probable glycine dehydrogenase (decarboxylating) subunit 1.